We begin with the raw amino-acid sequence, 349 residues long: Phosphoribosylformylglycinamidine cyclo-ligase (349 aa).

This sequence belongs to the AIR synthase family.

Its subcellular location is the cytoplasm. The enzyme catalyses 2-formamido-N(1)-(5-O-phospho-beta-D-ribosyl)acetamidine + ATP = 5-amino-1-(5-phospho-beta-D-ribosyl)imidazole + ADP + phosphate + H(+). Its pathway is purine metabolism; IMP biosynthesis via de novo pathway; 5-amino-1-(5-phospho-D-ribosyl)imidazole from N(2)-formyl-N(1)-(5-phospho-D-ribosyl)glycinamide: step 2/2. This is Phosphoribosylformylglycinamidine cyclo-ligase from Jannaschia sp. (strain CCS1).